The chain runs to 214 residues: tRNA (guanine-N(7)-)-methyltransferase (214 aa).

Residues glutamate 44, glutamate 69, aspartate 96, and aspartate 118 each coordinate S-adenosyl-L-methionine. Aspartate 118 is a catalytic residue. Substrate is bound by residues lysine 122, aspartate 154, and 191 to 194; that span reads TEYE.

It belongs to the class I-like SAM-binding methyltransferase superfamily. TrmB family.

It catalyses the reaction guanosine(46) in tRNA + S-adenosyl-L-methionine = N(7)-methylguanosine(46) in tRNA + S-adenosyl-L-homocysteine. The protein operates within tRNA modification; N(7)-methylguanine-tRNA biosynthesis. Its function is as follows. Catalyzes the formation of N(7)-methylguanine at position 46 (m7G46) in tRNA. The polypeptide is tRNA (guanine-N(7)-)-methyltransferase (Listeria monocytogenes serotype 4a (strain HCC23)).